A 342-amino-acid chain; its full sequence is MPITAQQALQRTIEHREIFHDEMLHLMRMIMNGELSPAMTAAIITGLRVKKETIGEITAAAQVMREFSTKVQVPDRKHLVDIVGTGGDGASTFNISTCAMFVAAAAGAKVSKHGGRSVSSKSGSADVMEALGIHIHLAPEAIARCIAEVGIGFMFAPNHHPAMKNVAPVRKELGVRTIFNILGPLTNPAEAPHVLVGVFHPDLVGIQVRALQRLGAEHVLVVYGRDGMDEASLGAATLVGELKNGQISEYDIHPEDFGLAMTSNRALKVDTPEQSRDMLLGVLRGQPGAAHDTVCLNAGVALYAANVAESIAAGLALARAAIASGAALAKLEQLVARTHALA.

5-phospho-alpha-D-ribose 1-diphosphate is bound by residues G84, 87–88 (GD), T92, 94–97 (NIST), 112–120 (KHGGRSVSS), and S124. Anthranilate is bound at residue G84. Mg(2+) is bound at residue S96. R170 contributes to the anthranilate binding site. Mg(2+) is bound by residues D229 and E230.

The protein belongs to the anthranilate phosphoribosyltransferase family. In terms of assembly, homodimer. Requires Mg(2+) as cofactor.

The enzyme catalyses N-(5-phospho-beta-D-ribosyl)anthranilate + diphosphate = 5-phospho-alpha-D-ribose 1-diphosphate + anthranilate. Its pathway is amino-acid biosynthesis; L-tryptophan biosynthesis; L-tryptophan from chorismate: step 2/5. Its function is as follows. Catalyzes the transfer of the phosphoribosyl group of 5-phosphorylribose-1-pyrophosphate (PRPP) to anthranilate to yield N-(5'-phosphoribosyl)-anthranilate (PRA). The polypeptide is Anthranilate phosphoribosyltransferase (Verminephrobacter eiseniae (strain EF01-2)).